The primary structure comprises 312 residues: tRNA uridine(34) hydroxylase (312 aa).

Positions 130 to 225 constitute a Rhodanese domain; it reads RGDEVVFFDG…YGEKFGNQGL (96 aa). Residue Cys185 is the Cysteine persulfide intermediate of the active site.

This sequence belongs to the TrhO family.

The catalysed reaction is uridine(34) in tRNA + AH2 + O2 = 5-hydroxyuridine(34) in tRNA + A + H2O. Its function is as follows. Catalyzes oxygen-dependent 5-hydroxyuridine (ho5U) modification at position 34 in tRNAs. This is tRNA uridine(34) hydroxylase from Corynebacterium efficiens (strain DSM 44549 / YS-314 / AJ 12310 / JCM 11189 / NBRC 100395).